We begin with the raw amino-acid sequence, 1045 residues long: Extracellular serine protease (1045 aa).

The N-terminal stretch at 1–27 (MILNKRLKLAYCVFLGCYGLSIHSSLA) is a signal peptide. The Peptidase S8 domain maps to 49 to 397 (QWGLEAISAE…WGRVNLRDAI (349 aa)). Catalysis depends on charge relay system residues D76, H112, and S341. The propeptide at 646–1045 (SLASTENEKA…SVNAGLTWRF (400 aa)) is translocator domain; removed in mature form. In terms of domain architecture, Autotransporter spans 769 to 1045 (IKADDNGAWA…SVNAGLTWRF (277 aa)).

This sequence belongs to the peptidase S8 family.

The protein localises to the secreted. In Serratia marcescens, this protein is Extracellular serine protease.